Consider the following 1463-residue polypeptide: Nucleoporin NUP152 (1463 aa).

3 disordered regions span residues 1-199 (MDPP…GRPG), 339-568 (GIPD…ELPA), and 609-1064 (TTKK…FGNT). Composition is skewed to polar residues over residues 32 to 42 (STNSNSVTANA), 81 to 92 (GPSSKLSQSVSA), 144 to 155 (TSSKATSFSGAP), 175 to 191 (TTYTQRVSSHPLTQSFP), 367 to 378 (PSSSTFTHTASP), and 416 to 472 (PAKT…SSNI). The segment covering 481-498 (KDEDNESDTGSEAEAEDE) has biased composition (acidic residues). Composition is skewed to low complexity over residues 511–523 (GASSSAPSEGGES) and 616–630 (AAAPAEAPKEATPTT). 3 stretches are compositionally biased toward polar residues: residues 651–664 (IFGSTTNPTETSIP), 673–689 (PATSTTNSLFGATTSAA), and 720–746 (TTESPKTNLFQFGTPNKTETAPATQPQ). The stretch at 729–732 (FQFG) is one FXFG 1 repeat. Residues 753–768 (KPPSTETPTEKPATTS) show a composition bias toward low complexity. Over residues 777-789 (PATTSSLFGSATT) the composition is skewed to polar residues. Low complexity predominate over residues 803 to 813 (TTTPADKPTTT). Over residues 814 to 828 (NLFGSTSTQATSGSD) the composition is skewed to polar residues. An FXFG 2 repeat occupies 835 to 838 (FAFG). The span at 840–863 (TTESKPTTSLFGSTTPAPATSTEN) shows a compositional bias: polar residues. A compositionally biased stretch (low complexity) spans 870–881 (ATTTSATPATNT). Composition is skewed to polar residues over residues 900–923 (GSSTTTAAPVFQFGSTPASTSTEQ), 940–961 (GSTSATSTEQKPLFGSSTTMTE), 968–987 (SISTTATEQKPLFGSTSTTE), 998–1029 (STEQKSLFGITPSTTENNPASIFGNSSTSTEQ), and 1037–1055 (PASTEQKPLFGSTPSTTEN). Residues 910-913 (FQFG) form an FXFG 3 repeat. FXFG repeat units follow at residues 1074–1077 (FNFG), 1127–1130 (FNFG), 1141–1144 (FTFG), and 1152–1155 (FTFG). 2 disordered regions span residues 1155 to 1174 (GASSDSSNASNNASSAPIFS) and 1179 to 1217 (QPSSTPLFGQNNPPAASNIFASSLAPVGGTSTGTSKHVP). Residues 1156–1170 (ASSDSSNASNNASSA) are compositionally biased toward low complexity. Residues 1173–1176 (FSFG) form an FXFG 8 repeat. Over residues 1179–1199 (QPSSTPLFGQNNPPAASNIFA) the composition is skewed to polar residues. An FXFG 9 repeat occupies 1236 to 1239 (FTFG). The segment covering 1240 to 1271 (GASSLATTPAASTPEPSAANAAAAGEDQGASA) has biased composition (low complexity). Disordered regions lie at residues 1240-1335 (GASS…PWKV) and 1416-1463 (AALE…DEKK). The RanBD1 domain occupies 1289–1427 (GEEDESVVHE…LEEHKKANEK (139 aa)). The span at 1418–1463 (LEEHKKANEKKDGEKNEESEKKDEKQEEKKNEEKKDEKEEKKDEKK) shows a compositional bias: basic and acidic residues.

The nuclear pore complex (NPC) constitutes the exclusive means of nucleocytoplasmic transport. NPCs allow the passive diffusion of ions and small molecules and the active, nuclear transport receptor-mediated bidirectional transport of macromolecules such as proteins, RNAs, ribonucleoparticles (RNPs), and ribosomal subunits across the nuclear envelope. The 55-60 MDa NPC is composed of at least 28 different subunits: AMO1, ELYS, GLE1, GLE2, MLP1, NDC1, NIC96, NSP1, NUP133, NUP145, NUP152, NUP159, NUP170, NUP188, NUP192, NUP37, NUP49, NUP53, NUP56, NUP57, NUP82, NUP84, NUP85, POM152, POM33, POM34, SEC13 and SEH1. Due to its 8-fold rotational symmetry, all subunits are present with 8 copies or multiples thereof.

It localises to the nucleus. It is found in the nuclear pore complex. The protein localises to the nucleus membrane. Its function is as follows. Functions as a component of the nuclear pore complex (NPC). NPC components, collectively referred to as nucleoporins (NUPs), can play the role of both NPC structural components and of docking or interaction partners for transiently associated nuclear transport factors. Active directional transport is assured by both, a Phe-Gly (FG) repeat affinity gradient for these transport factors across the NPC and a transport cofactor concentration gradient across the nuclear envelope (GSP1 and GSP2 GTPases associated predominantly with GTP in the nucleus, with GDP in the cytoplasm). The polypeptide is Nucleoporin NUP152 (NUP152) (Chaetomium thermophilum (strain DSM 1495 / CBS 144.50 / IMI 039719) (Thermochaetoides thermophila)).